Here is a 366-residue protein sequence, read N- to C-terminus: Cellular tumor antigen p53 (366 aa).

The tract at residues 1 to 41 (MMDEQGLDGMQILPGSQDSFSELWASVQTPSIATIAEEFDD) is transcription activation (acidic). The DNA-binding element occupies 80–267 (DYPGEYGFQL…KTDEESSTKT (188 aa)). The Zn(2+) site is built by Cys-154, His-157, Cys-213, and Cys-217. The interaction with DNA stretch occupies residues 248-255 (RVCACPGR). Positions 255–264 (RDRKTDEESS) are enriched in basic and acidic residues. Positions 255–305 (RDRKTDEESSTKTPNGPKQTKKRKQAPSNSAPHTTTVMKSKSSSSAEEEDK) are disordered. Residues 275–295 (KKRKQAPSNSAPHTTTVMKSK) carry the Bipartite nuclear localization signal motif. Positions 280 to 292 (APSNSAPHTTTVM) are enriched in polar residues. Residues 305-336 (KEVFTVLVKGRERYEIIKKINEAFEGAAEKEK) are oligomerization. The Nuclear export signal motif lies at 319–330 (EIIKKINEAFEG). Positions 332-366 (AEKEKAKNKVAVKQELPVPSSGKRLVQRGERSDSD) are disordered. Residues 341–362 (VAVKQELPVPSSGKRLVQRGER) form a basic (repression of DNA-binding) region.

The protein belongs to the p53 family. As to quaternary structure, binds DNA as a homotetramer. It depends on Zn(2+) as a cofactor.

It is found in the cytoplasm. Its subcellular location is the nucleus. Functionally, multifunctional transcription factor that induces cell cycle arrest, DNA repair or apoptosis upon binding to its target DNA sequence. Acts as a tumor suppressor in many tumor types; induces growth arrest or apoptosis depending on the physiological circumstances and cell type. Negatively regulates cell division by controlling expression of a set of genes required for this process. One of the activated genes is an inhibitor of cyclin-dependent kinases. Apoptosis induction seems to be mediated either by stimulation of BAX and FAS antigen expression, or by repression of Bcl-2 expression. In Platichthys flesus (European flounder), this protein is Cellular tumor antigen p53 (tp53).